The sequence spans 531 residues: Plant UBX domain-containing protein 11 (531 aa).

M1 carries the post-translational modification N-acetylmethionine. Low complexity predominate over residues 160-173 (AVASPSTASSVQPS). Disordered regions lie at residues 160–316 (AVAS…KASD) and 441–531 (ANAS…NDRR). 2 stretches are compositionally biased toward polar residues: residues 174–190 (ETKS…NNDG) and 201–214 (EPSN…NQPA). The span at 290–301 (VDTKETMKPKDE) shows a compositional bias: basic and acidic residues. The UBX domain maps to 312–390 (KKASDVHLNI…RLFDRQALVV (79 aa)). Composition is skewed to polar residues over residues 441-478 (ANAS…GRSN) and 486-496 (TSRIGSNIHTL).

Interacts with CDC48A.

This chain is Plant UBX domain-containing protein 11, found in Arabidopsis thaliana (Mouse-ear cress).